The chain runs to 382 residues: Mannitol-1-phosphate 5-dehydrogenase (382 aa).

3-14 (ALHFGAGNIGRG) serves as a coordination point for NAD(+).

Belongs to the mannitol dehydrogenase family.

It catalyses the reaction D-mannitol 1-phosphate + NAD(+) = beta-D-fructose 6-phosphate + NADH + H(+). The sequence is that of Mannitol-1-phosphate 5-dehydrogenase (mtlD) from Klebsiella pneumoniae.